The chain runs to 1216 residues: Phospholipase D B (1216 aa).

A compositionally biased stretch (polar residues) spans 1–14 (MNLSQEHAINQNLH). A disordered region spans residues 1-48 (MNLSQEHAINQNLHKNQKNEEKIEKKTINKDGRGQMNYDGEEGQGEKS). The span at 17–33 (QKNEEKIEKKTINKDGR) shows a compositional bias: basic and acidic residues. 2 consecutive EF-hand domains span residues 196–231 (RNADLTISLMNAIDRNGDQKIAFPEFVQALSIMCRG) and 232–267 (TKKERLRFTFEICDFNGDSLVSRDEVYSTVKAISDI). Residues Asp-209, Asn-211, Asp-213, Lys-215, and Glu-220 each contribute to the Ca(2+) site. Positions 347-462 (EINMNGQLTK…WVNAIRFHSR (116 aa)) constitute a PH domain. The region spanning 585 to 612 (LSWSHHQKNAIIDQQIAFVGGIDICLMR) is the PLD phosphodiesterase 1 domain. Active-site residues include His-590, Lys-592, and Asp-597. The segment at 732 to 844 (VSYGREKPTH…GLKSKNYKNN (113 aa)) is disordered. A compositionally biased stretch (low complexity) spans 776–789 (NNSTNSENSENSYS). Residues 790–813 (EFDEEDEEGNQEEEDEDEFDEFEK) show a composition bias toward acidic residues. The region spanning 1036–1063 (EQIYVHSKVLIVDDRVAVIGSCNINDRS) is the PLD phosphodiesterase 2 domain. Catalysis depends on residues His-1041, Lys-1043, and Asp-1048.

The protein belongs to the phospholipase D family.

It localises to the cytoplasmic vesicle. The protein resides in the cytoplasm. It is found in the cell cortex. The enzyme catalyses a 1,2-diacyl-sn-glycero-3-phosphocholine + H2O = a 1,2-diacyl-sn-glycero-3-phosphate + choline + H(+). With respect to regulation, inhibited by butan-1-ol. Functionally, plays a role in cell growth. Hydrolyzes membrane phospholipids, such as PtdCho (phosphatidylcholine), producing the free headgroup and PtdOH (phosphatidic acid; signaling molecule on its own). Involved in the inhibition of actin-based motility and endocytosis. Its inhibition causes complete collapse of F-actin organization. Plays an important role in cell migration by localizing along the anterior cell membrane. Overexpression leads to the inability to aggregate even at higher cell density. Also known as a negative regulator of quorum sensing. This Dictyostelium discoideum (Social amoeba) protein is Phospholipase D B (pldB).